The primary structure comprises 471 residues: Phosphatidylserine synthase 1 (471 aa).

A2 bears the N-acetylalanine mark. The Cytoplasmic segment spans residues A2–D35. A helical transmembrane segment spans residues F36 to F56. Over A57–G72 the chain is Lumenal. The chain crosses the membrane as a helical span at residues I73–F93. At T94 to R102 the chain is on the cytoplasmic side. A helical transmembrane segment spans residues M103–F123. Residues E124–R160 lie on the Lumenal side of the membrane. Residues I161 to L181 form a helical membrane-spanning segment. Topologically, residues L182 to Y186 are cytoplasmic. Residues G187–L207 form a helical membrane-spanning segment. Residues P208–D216 lie on the Lumenal side of the membrane. The chain crosses the membrane as a helical span at residues Q217 to C237. Residues R238–R286 lie on the Cytoplasmic side of the membrane. The helical transmembrane segment at V287 to L307 threads the bilayer. The Lumenal segment spans residues K308–H309. A helical membrane pass occupies residues I310–I330. The Cytoplasmic portion of the chain corresponds to T331–W355. A helical transmembrane segment spans residues V356–F376. Residues S377–Q380 lie on the Lumenal side of the membrane. The helical transmembrane segment at I381–G401 threads the bilayer. Topologically, residues M402–K471 are cytoplasmic. Phosphoserine occurs at positions 417, 440, and 452. A disordered region spans residues I426–K471. The segment covering S453–S462 has biased composition (basic residues).

This sequence belongs to the phosphatidyl serine synthase family.

The protein localises to the endoplasmic reticulum membrane. It carries out the reaction a 1,2-diacyl-sn-glycero-3-phosphoethanolamine + L-serine = a 1,2-diacyl-sn-glycero-3-phospho-L-serine + ethanolamine. The catalysed reaction is a 1,2-diacyl-sn-glycero-3-phosphocholine + L-serine = a 1,2-diacyl-sn-glycero-3-phospho-L-serine + choline. It participates in phospholipid metabolism; phosphatidylserine biosynthesis. With respect to regulation, inhibited by exogenous phosphatidylserine. Its function is as follows. Catalyzes a base-exchange reaction in which the polar head group of phosphatidylethanolamine (PE) or phosphatidylcholine (PC) is replaced by L-serine. Catalyzes mainly the conversion of phosphatidylcholine. Also converts, in vitro and to a lesser extent, phosphatidylethanolamine. This is Phosphatidylserine synthase 1 (PTDSS1) from Cricetulus griseus (Chinese hamster).